The chain runs to 307 residues: Heme A synthase (307 aa).

At 1 to 6 (MKFALR) the chain is on the cytoplasmic side. A helical membrane pass occupies residues 7 to 27 (LLSVITTFVMLIVLIGGALVT). Over 28–65 (KTGSGLGCGRQWPLCHGRFFPEMNPASIIEWSHRMSTG) the chain is Extracellular. The cysteines at positions 35 and 42 are disulfide-linked. Residue Glu-57 is part of the active site. Position 60 (His-60) interacts with heme o. The helical transmembrane segment at 66 to 86 (VSTILVLALAVLCWKKISPVF) threads the bilayer. Topologically, residues 87 to 92 (RETKFL) are cytoplasmic. The helical transmembrane segment at 93-113 (VIMSIIFLLLQALLGALAVVF) threads the bilayer. The Extracellular portion of the chain corresponds to 114–121 (GSNALVMA). Residues 122 to 142 (LHFGISLISFASVLLLALLVF) traverse the membrane as a helical segment. His-123 provides a ligand contact to heme o. Residues 143-161 (EATRSETKLVKPLHIGKKM) lie on the Cytoplasmic side of the membrane. A helical transmembrane segment spans residues 162 to 182 (QFHIYGLITYTYIVVYTGAYV). At 183–216 (RHTKSSLACSVFPFCSKDGALPAYFNQWVQMSHR) the chain is on the extracellular side. Cysteines 191 and 197 form a disulfide. His-215 provides a ligand contact to heme b. The chain crosses the membrane as a helical span at residues 217–237 (AAALLLFVWIFVAMFHAMKHY). Over 238-242 (KEQKQ) the chain is Cytoplasmic. A helical transmembrane segment spans residues 243 to 263 (LYYGWIISAILITLQAISGVM). At 264 to 274 (SVYSQLALGYA) the chain is on the extracellular side. Residues 275-295 (LAHSFFISCLFGVLCYFCLLI) traverse the membrane as a helical segment. His-277 serves as a coordination point for heme b. Topologically, residues 296–307 (ARFKYESKEPFK) are cytoplasmic.

It belongs to the COX15/CtaA family. Type 1 subfamily. Interacts with CtaB. Heme b is required as a cofactor.

It localises to the cell membrane. The catalysed reaction is Fe(II)-heme o + 2 A + H2O = Fe(II)-heme a + 2 AH2. It functions in the pathway porphyrin-containing compound metabolism; heme A biosynthesis; heme A from heme O: step 1/1. Catalyzes the conversion of heme O to heme A by two successive hydroxylations of the methyl group at C8. The first hydroxylation forms heme I, the second hydroxylation results in an unstable dihydroxymethyl group, which spontaneously dehydrates, resulting in the formyl group of heme A. This Bacillus pumilus (strain SAFR-032) protein is Heme A synthase.